Here is a 226-residue protein sequence, read N- to C-terminus: Lysoplasmalogenase TMEM86B (226 aa).

The Cytoplasmic segment spans residues 1-23 (MDPGKEGLPRKPRFSAQQLHVGK). A helical transmembrane segment spans residues 24-40 (WLSPFFFTCAVYFLLWI). Residues 41–46 (PDDQPS) lie on the Extracellular side of the membrane. The chain crosses the membrane as a helical span at residues 47–64 (WVGALVKCLPVLSLVVFL). Residues 65–76 (RAVDAGGGYSAR) lie on the Cytoplasmic side of the membrane. A helical membrane pass occupies residues 77–93 (LQGALLCSAVGDACLVW). The Extracellular segment spans residues 94 to 99 (PEAFLH). Residues 100–117 (GVAAFAAAHLLYLWAFGL) form a helical membrane-spanning segment. At 118-123 (TPLQPG) the chain is on the cytoplasmic side. Residues 124–140 (LLLLVILAALPYYGLLL) traverse the membrane as a helical segment. The Extracellular portion of the chain corresponds to 141–146 (WHLPPD). Residues 147-163 (LVLALTAYSLALATMLW) traverse the membrane as a helical segment. The Cytoplasmic portion of the chain corresponds to 164-171 (RGLARGGS). A helical membrane pass occupies residues 172–188 (TGWGALLFTLSDTTLAW). Over 189–199 (NAFAQPLPHAR) the chain is Extracellular. The chain crosses the membrane as a helical span at residues 200–217 (LVVMTTYYSAQVLISLSV). The Cytoplasmic segment spans residues 218 to 226 (SQSPKLKPN).

The protein belongs to the TMEM86 family. In terms of assembly, homodimer.

The protein localises to the endoplasmic reticulum membrane. The protein resides in the cytoplasm. It catalyses the reaction a 1-O-(1Z-alkenyl)-sn-glycero-3-phosphocholine + H2O = a 2,3-saturated aldehyde + sn-glycerol 3-phosphocholine. The catalysed reaction is a 1-O-(1Z-alkenyl)-sn-glycero-3-phosphoethanolamine + H2O = a 2,3-saturated aldehyde + sn-glycero-3-phosphoethanolamine. With respect to regulation, competitively inhibited by lysophosphatidic acid. In terms of biological role, catalyzes the hydrolysis of the vinyl ether bond of choline or ethanolamine lysoplasmalogens, forming fatty aldehyde and glycerophosphocholine or glycerophosphoethanolamine, respectively and is specific for the sn-2-deacylated (lyso) form of plasmalogen. In Sus scrofa (Pig), this protein is Lysoplasmalogenase TMEM86B (TMEM86B).